A 683-amino-acid polypeptide reads, in one-letter code: Phenoloxidase 3 (683 aa).

Residues 1 to 48 constitute a propeptide that is removed on maturation; the sequence is MADKKNLLLLFDHPTEPVFMDKGGNGTVFDVPDSYVTDRYNQMCKKVQ. The Cu cation site is built by histidine 209, histidine 213, and histidine 239. Catalysis depends on glutamate 351, which acts as the Proton acceptor. An N-linked (GlcNAc...) asparagine glycan is attached at asparagine 358. Cu cation-binding residues include histidine 366, histidine 370, and histidine 406. N-linked (GlcNAc...) asparagine glycosylation is found at asparagine 492 and asparagine 546. Disulfide bonds link cysteine 574–cysteine 617 and cysteine 576–cysteine 624.

This sequence belongs to the tyrosinase family. Requires Cu(2+) as cofactor. In terms of processing, upon activation, a trypsin type protease cleaves prophenol oxidase to yield the active enzyme.

Its subcellular location is the secreted. The enzyme catalyses 2 L-dopa + O2 = 2 L-dopaquinone + 2 H2O. It carries out the reaction L-tyrosine + O2 = L-dopaquinone + H2O. Functionally, this is a copper-containing oxidase that functions in the formation of pigments such as melanins and other polyphenolic compounds. Catalyzes the rate-limiting conversions of tyrosine to DOPA, DOPA to DOPA-quinone and possibly 5,6 dihydroxyindole to indole-5'6 quinone. The sequence is that of Phenoloxidase 3 (PPO3) from Drosophila melanogaster (Fruit fly).